The sequence spans 528 residues: U3 small nucleolar RNA-associated protein 15 homolog (528 aa).

Residue Ala2 is modified to N-acetylalanine. WD repeat units lie at residues 36 to 75 (KEFG…PVKT), 78 to 117 (RFKD…PLRQ), 120 to 159 (GHTK…EILT), 162 to 202 (EHSD…NVLC), 204 to 242 (EHGQ…QLLV), 246 to 285 (NHHK…VVHS), and 287 to 326 (DYAA…KKES). Residue Lys249 forms a Glycyl lysine isopeptide (Lys-Gly) (interchain with G-Cter in SUMO2) linkage. The disordered stretch occupies residues 508–528 (AELPEEKTESPRQPSDTDKNS). The segment covering 511–528 (PEEKTESPRQPSDTDKNS) has biased composition (basic and acidic residues).

As to quaternary structure, part of the small subunit (SSU) processome, composed of more than 70 proteins and the RNA chaperone small nucleolar RNA (snoRNA) U3. May be a component of the proposed t-UTP subcomplex of the ribosomal small subunit (SSU) processome containing at least UTP4, WDR43, HEATR1, UTP15, WDR75. Interacts directly with UTP4 and WDR43.

It localises to the nucleus. The protein resides in the nucleolus. Ribosome biogenesis factor. Involved in nucleolar processing of pre-18S ribosomal RNA. Required for optimal pre-ribosomal RNA transcription by RNA polymerase I. Part of the small subunit (SSU) processome, first precursor of the small eukaryotic ribosomal subunit. During the assembly of the SSU processome in the nucleolus, many ribosome biogenesis factors, an RNA chaperone and ribosomal proteins associate with the nascent pre-rRNA and work in concert to generate RNA folding, modifications, rearrangements and cleavage as well as targeted degradation of pre-ribosomal RNA by the RNA exosome. This is U3 small nucleolar RNA-associated protein 15 homolog from Rattus norvegicus (Rat).